Consider the following 346-residue polypeptide: Cell division protein ZipA (346 aa).

Topologically, residues 1–6 (MEDLQL) are periplasmic. Residues 7–27 (VLFVLGAIAIVAVLVHGFWSI) form a helical membrane-spanning segment. Residues 28 to 346 (RRQQPKSLKD…DYLHRIRANA (319 aa)) are Cytoplasmic-facing. Disordered stretches follow at residues 76 to 103 (ANEA…QPVE) and 121 to 145 (QPDF…RQEP).

It belongs to the ZipA family. Interacts with FtsZ via their C-terminal domains.

The protein localises to the cell inner membrane. Essential cell division protein that stabilizes the FtsZ protofilaments by cross-linking them and that serves as a cytoplasmic membrane anchor for the Z ring. Also required for the recruitment to the septal ring of downstream cell division proteins. The polypeptide is Cell division protein ZipA (Shewanella sp. (strain MR-7)).